We begin with the raw amino-acid sequence, 115 residues long: NADH-ubiquinone oxidoreductase chain 3 (115 aa).

The next 3 helical transmembrane spans lie at 4-24 (ALTL…AFWL), 55-75 (FFLV…LLPL), and 84-104 (LTTM…SLAY).

It belongs to the complex I subunit 3 family. Core subunit of respiratory chain NADH dehydrogenase (Complex I) which is composed of 45 different subunits. Interacts with TMEM186. Interacts with TMEM242.

The protein localises to the mitochondrion inner membrane. It catalyses the reaction a ubiquinone + NADH + 5 H(+)(in) = a ubiquinol + NAD(+) + 4 H(+)(out). Its function is as follows. Core subunit of the mitochondrial membrane respiratory chain NADH dehydrogenase (Complex I) which catalyzes electron transfer from NADH through the respiratory chain, using ubiquinone as an electron acceptor. Essential for the catalytic activity of complex I. The protein is NADH-ubiquinone oxidoreductase chain 3 of Phoca vitulina (Harbor seal).